The following is a 60-amino-acid chain: UPF0181 protein PMI1604 (60 aa).

This sequence belongs to the UPF0181 family.

This chain is UPF0181 protein PMI1604, found in Proteus mirabilis (strain HI4320).